Reading from the N-terminus, the 418-residue chain is NADH-quinone oxidoreductase subunit D (418 aa).

Belongs to the complex I 49 kDa subunit family. NDH-1 is composed of 14 different subunits. Subunits NuoB, C, D, E, F, and G constitute the peripheral sector of the complex.

The protein localises to the cell inner membrane. It catalyses the reaction a quinone + NADH + 5 H(+)(in) = a quinol + NAD(+) + 4 H(+)(out). In terms of biological role, NDH-1 shuttles electrons from NADH, via FMN and iron-sulfur (Fe-S) centers, to quinones in the respiratory chain. The immediate electron acceptor for the enzyme in this species is believed to be ubiquinone. Couples the redox reaction to proton translocation (for every two electrons transferred, four hydrogen ions are translocated across the cytoplasmic membrane), and thus conserves the redox energy in a proton gradient. The sequence is that of NADH-quinone oxidoreductase subunit D from Neisseria meningitidis serogroup B (strain ATCC BAA-335 / MC58).